A 110-amino-acid polypeptide reads, in one-letter code: UPF0060 membrane protein Mfla_2554 (110 aa).

4 helical membrane-spanning segments follow: residues 7 to 27, 33 to 53, 61 to 81, and 83 to 103; these read VALFVITALAEIIGCYLPYLW, SPLLLIPAAISLALFAWLLTL, VYAAYGGVYIFVAIFWLWVVD, and IIPSNWDFLGASVALLGMAII.

This sequence belongs to the UPF0060 family.

Its subcellular location is the cell inner membrane. The polypeptide is UPF0060 membrane protein Mfla_2554 (Methylobacillus flagellatus (strain ATCC 51484 / DSM 6875 / VKM B-1610 / KT)).